The primary structure comprises 75 residues: Molt-inhibiting hormone (75 aa).

Intrachain disulfides connect Cys-7-Cys-44, Cys-24-Cys-40, and Cys-27-Cys-53. Ala-75 is modified (alanine amide).

This sequence belongs to the arthropod CHH/MIH/GIH/VIH hormone family.

The protein localises to the secreted. Functionally, inhibits Y-organs where molting hormone (ecdysteroid) is secreted. A molting cycle is initiated when MIH secretion diminishes or stops. This chain is Molt-inhibiting hormone, found in Procambarus clarkii (Red swamp crayfish).